The primary structure comprises 119 residues: Ribonuclease P protein component (119 aa).

The protein belongs to the RnpA family. In terms of assembly, consists of a catalytic RNA component (M1 or rnpB) and a protein subunit.

The enzyme catalyses Endonucleolytic cleavage of RNA, removing 5'-extranucleotides from tRNA precursor.. In terms of biological role, RNaseP catalyzes the removal of the 5'-leader sequence from pre-tRNA to produce the mature 5'-terminus. It can also cleave other RNA substrates such as 4.5S RNA. The protein component plays an auxiliary but essential role in vivo by binding to the 5'-leader sequence and broadening the substrate specificity of the ribozyme. This chain is Ribonuclease P protein component, found in Clostridium acetobutylicum (strain ATCC 824 / DSM 792 / JCM 1419 / IAM 19013 / LMG 5710 / NBRC 13948 / NRRL B-527 / VKM B-1787 / 2291 / W).